The sequence spans 126 residues: Ribosome-binding factor A (126 aa).

It belongs to the RbfA family. Monomer. Binds 30S ribosomal subunits, but not 50S ribosomal subunits or 70S ribosomes.

The protein localises to the cytoplasm. Functionally, one of several proteins that assist in the late maturation steps of the functional core of the 30S ribosomal subunit. Associates with free 30S ribosomal subunits (but not with 30S subunits that are part of 70S ribosomes or polysomes). Required for efficient processing of 16S rRNA. May interact with the 5'-terminal helix region of 16S rRNA. This is Ribosome-binding factor A from Geobacillus sp. (strain WCH70).